A 290-amino-acid polypeptide reads, in one-letter code: Putative phosphoenolpyruvate synthase regulatory protein (290 aa).

Residue 170-177 (GVSRCGKT) coordinates ADP.

This sequence belongs to the pyruvate, phosphate/water dikinase regulatory protein family. PSRP subfamily.

The enzyme catalyses [pyruvate, water dikinase] + ADP = [pyruvate, water dikinase]-phosphate + AMP + H(+). The catalysed reaction is [pyruvate, water dikinase]-phosphate + phosphate + H(+) = [pyruvate, water dikinase] + diphosphate. In terms of biological role, bifunctional serine/threonine kinase and phosphorylase involved in the regulation of the phosphoenolpyruvate synthase (PEPS) by catalyzing its phosphorylation/dephosphorylation. The polypeptide is Putative phosphoenolpyruvate synthase regulatory protein (ydiA) (Enterobacter agglomerans (Erwinia herbicola)).